The chain runs to 469 residues: D-3-phosphoglycerate dehydrogenase 2 (469 aa).

Ser2 is modified (N-acetylserine). 3 positions are modified to phosphoserine: Ser22, Ser29, and Ser33. NAD(+)-binding positions include 208-209 (HI), Asp228, 285-287 (ASR), and Asp311. Residue Arg287 is part of the active site. Residue Glu316 is part of the active site. The Proton donor role is filled by His347. 347 to 350 (HIGG) contacts NAD(+). The ACT domain maps to 399–469 (RVLYIHRNVP…SAKVSIRLLY (71 aa)).

This sequence belongs to the D-isomer specific 2-hydroxyacid dehydrogenase family.

It catalyses the reaction (2R)-3-phosphoglycerate + NAD(+) = 3-phosphooxypyruvate + NADH + H(+). It carries out the reaction (R)-2-hydroxyglutarate + NAD(+) = 2-oxoglutarate + NADH + H(+). The protein operates within amino-acid biosynthesis; L-serine biosynthesis; L-serine from 3-phospho-D-glycerate: step 1/3. Functionally, catalyzes the reversible oxidation of 3-phospho-D-glycerate to 3-phosphonooxypyruvate, the first step of the phosphorylated L-serine biosynthesis pathway. Also catalyzes the reversible oxidation of 2-hydroxyglutarate to 2-oxoglutarate. This is D-3-phosphoglycerate dehydrogenase 2 (SER33) from Saccharomyces cerevisiae (strain ATCC 204508 / S288c) (Baker's yeast).